The following is a 665-amino-acid chain: DNA mismatch repair protein MutL (665 aa).

This sequence belongs to the DNA mismatch repair MutL/HexB family.

This protein is involved in the repair of mismatches in DNA. It is required for dam-dependent methyl-directed DNA mismatch repair. May act as a 'molecular matchmaker', a protein that promotes the formation of a stable complex between two or more DNA-binding proteins in an ATP-dependent manner without itself being part of a final effector complex. This chain is DNA mismatch repair protein MutL, found in Acidobacterium capsulatum (strain ATCC 51196 / DSM 11244 / BCRC 80197 / JCM 7670 / NBRC 15755 / NCIMB 13165 / 161).